A 143-amino-acid polypeptide reads, in one-letter code: S-adenosylmethionine decarboxylase proenzyme (143 aa).

Catalysis depends on S66, which acts as the Schiff-base intermediate with substrate; via pyruvic acid. Pyruvic acid (Ser); by autocatalysis is present on S66. The active-site Proton acceptor; for processing activity is H71. C86 acts as the Proton donor; for catalytic activity in catalysis.

This sequence belongs to the prokaryotic AdoMetDC family. Type 1 subfamily. As to quaternary structure, heterotetramer of two alpha and two beta chains arranged as a dimer of alpha/beta heterodimers. It depends on pyruvate as a cofactor. In terms of processing, is synthesized initially as an inactive proenzyme. Formation of the active enzyme involves a self-maturation process in which the active site pyruvoyl group is generated from an internal serine residue via an autocatalytic post-translational modification. Two non-identical subunits are generated from the proenzyme in this reaction, and the pyruvate is formed at the N-terminus of the alpha chain, which is derived from the carboxyl end of the proenzyme. The post-translation cleavage follows an unusual pathway, termed non-hydrolytic serinolysis, in which the side chain hydroxyl group of the serine supplies its oxygen atom to form the C-terminus of the beta chain, while the remainder of the serine residue undergoes an oxidative deamination to produce ammonia and the pyruvoyl group blocking the N-terminus of the alpha chain.

The catalysed reaction is S-adenosyl-L-methionine + H(+) = S-adenosyl 3-(methylsulfanyl)propylamine + CO2. The protein operates within amine and polyamine biosynthesis; S-adenosylmethioninamine biosynthesis; S-adenosylmethioninamine from S-adenosyl-L-methionine: step 1/1. Catalyzes the decarboxylation of S-adenosylmethionine to S-adenosylmethioninamine (dcAdoMet), the propylamine donor required for the synthesis of the polyamines spermine and spermidine from the diamine putrescine. This chain is S-adenosylmethionine decarboxylase proenzyme, found in Thermococcus kodakarensis (strain ATCC BAA-918 / JCM 12380 / KOD1) (Pyrococcus kodakaraensis (strain KOD1)).